A 460-amino-acid chain; its full sequence is Mitochondrial distribution and morphology protein 34 (460 aa).

Residues 1–196 (MSFKFDWESL…LPGIIHRLSQ (196 aa)) enclose the SMP-LTD domain. Basic residues predominate over residues 304–321 (HNHQAPKRRTIKYKRKSK). Disordered regions lie at residues 304–356 (HNHQ…PSRE) and 368–460 (EPSS…AYSG). 2 stretches are compositionally biased toward low complexity: residues 330–355 (STEVTTRETTPLPTSSTPLETSTPSR) and 393–405 (SPPSLDLSIDTSL).

It belongs to the MDM34 family. As to quaternary structure, component of the ER-mitochondria encounter structure (ERMES) or MDM complex, composed of MMM1, MDM10, MDM12 and MDM34.

Its subcellular location is the mitochondrion outer membrane. Component of the ERMES/MDM complex, which serves as a molecular tether to connect the endoplasmic reticulum (ER) and mitochondria. Components of this complex are involved in the control of mitochondrial shape and protein biogenesis, and function in nonvesicular lipid trafficking between the ER and mitochondria. MDM34 is required for the interaction of the ER-resident membrane protein MMM1 and the outer mitochondrial membrane-resident beta-barrel protein MDM10. This chain is Mitochondrial distribution and morphology protein 34, found in Yarrowia lipolytica (strain CLIB 122 / E 150) (Yeast).